A 272-amino-acid polypeptide reads, in one-letter code: MARLAAFDMDGTLLMPDHHLGRETIATLSRLRERDITLTFATGRHVLEMRHILGTLSLDAYLITGNGTRIHSLEGDVLHRQDLDPQVADTVMHHAWDTRASMHVFNDNGWFTGQEIPALLQAHVYSGFRYQVIDIKSIPAHQVTKICFCGDHDDLIRLRIQLNEALEERAHLCFSAVDCLEVLPLGCNKGSALAVLSNHLGLSLADCMAFGDAMNDREMLGSVGRGLIMGNAMPQLIAALPHLSVIGHCGNQAVSHFLTHWLDNPHLPYSPE.

Residue Asp8 is the Nucleophile of the active site. Mg(2+) contacts are provided by Asp8, Asp10, and Asp212.

The protein belongs to the HAD-like hydrolase superfamily. Cof family. Requires Mg(2+) as cofactor.

It catalyses the reaction 4-amino-2-methyl-5-(diphosphooxymethyl)pyrimidine + H2O = 4-amino-2-methyl-5-(phosphooxymethyl)pyrimidine + phosphate + H(+). Functionally, catalyzes the hydrolysis of 4-amino-2-methyl-5-hydroxymethylpyrimidine pyrophosphate (HMP-PP) to 4-amino-2-methyl-5-hydroxymethylpyrimidine phosphate (HMP-P). The sequence is that of HMP-PP phosphatase from Salmonella typhi.